An 852-amino-acid chain; its full sequence is DNA double-strand break repair Rad50 ATPase (852 aa).

The ATP site is built by Asn32, Gly33, Ala34, Gly35, Lys36, Ser37, Ser38, Arg53, Tyr54, Asp59, Val61, and Arg63. A Mg(2+)-binding site is contributed by Ser37. Residue Gln142 participates in Mg(2+) binding. 2 coiled-coil regions span residues 155–345 (EITE…EELD) and 389–427 (LLSI…QIAS). The Zinc-hook domain maps to 389-488 (LLSIEKTENE…SLSSLIEDLL (100 aa)). 2 residues coordinate Zn(2+): Cys435 and Cys438. Coiled-coil stretches lie at residues 460–488 (DQKR…EDLL) and 534–711 (KIEE…LFDK). Asp797 serves as a coordination point for Mg(2+).

Belongs to the SMC family. RAD50 subfamily. As to quaternary structure, homodimer. Forms a complex with Mre11. Zn(2+) serves as cofactor.

The enzyme catalyses ATP + H2O = ADP + phosphate + H(+). In terms of biological role, involved in DNA double-strand break repair (DSBR). The Rad50/Mre11 complex possesses single-strand endonuclease activity and ATP-dependent double-strand-specific 3'-5' exonuclease activity. Rad50 provides an ATP-dependent control of Mre11 by positioning DNA ends into the Mre11 active site: ATP-binding induces a large structural change from an open form with accessible Mre11 nuclease sites into a closed form. The polypeptide is DNA double-strand break repair Rad50 ATPase (Thermotoga maritima (strain ATCC 43589 / DSM 3109 / JCM 10099 / NBRC 100826 / MSB8)).